The sequence spans 315 residues: Malate dehydrogenase (315 aa).

Residue 9 to 15 (GGSGNVG) participates in NAD(+) binding. The substrate site is built by Arg84 and Arg90. NAD(+)-binding positions include Asn97 and 120 to 122 (VSN). Residues Asn122 and Arg153 each contribute to the substrate site. The active-site Proton acceptor is His177.

It belongs to the LDH/MDH superfamily.

The catalysed reaction is (S)-malate + NAD(+) = oxaloacetate + NADH + H(+). Its function is as follows. Catalyzes the reversible oxidation of malate to oxaloacetate. The polypeptide is Malate dehydrogenase (Helicobacter hepaticus (strain ATCC 51449 / 3B1)).